Consider the following 557-residue polypeptide: Copine-6 (557 aa).

C2 domains are found at residues 1-127 (MSDP…TKPL) and 134-263 (TAGK…MQWD). Asp-167, Asp-173, Asp-229, Asp-231, and Asp-237 together coordinate Ca(2+). The segment at 244-303 (STFQEMQEGTANPGQEMQWDCINPKYRDKKKNYKSSGTVVLAQCTVEKVHTFLDYIMGGC) is linker region. A VWFA domain is found at 306 to 526 (SFTVAIDFTA…ALAKCVLAEV (221 aa)).

This sequence belongs to the copine family. As to quaternary structure, interacts (via second C2 domain) with OS9 (via C-terminus); this interaction occurs in a calcium-dependent manner in vitro. May interact with NECAB1. Ca(2+) is required as a cofactor. Expressed in the brain. Expressed in pyramidal cells, granule cells, and neurons in the dentate gyrus of the hippocampus and in granule cells of the olfactory bulb (at protein level). Expressed in pyramidal cells of the CA1-CA3 regions, in granule cells of the dentate gyrus, in granule cells of the olfactory bulbs, in the mitral cell layer and in neurons of the cerebral cortex layer II, brainstem and spinal cord. Not detected in glial cells.

Its subcellular location is the cytoplasm. The protein resides in the cell membrane. The protein localises to the endosome. It localises to the cytoplasmic vesicle. It is found in the clathrin-coated vesicle. Its subcellular location is the perikaryon. The protein resides in the cell projection. The protein localises to the dendrite. In terms of biological role, calcium-dependent phospholipid-binding protein that plays a role in calcium-mediated intracellular processes. Binds phospholipid membranes in a calcium-dependent manner. Plays a role in dendrite formation by melanocytes. The chain is Copine-6 from Mus musculus (Mouse).